The primary structure comprises 430 residues: Alpha-(1-&gt;3)-arabinofuranosyltransferase (430 aa).

Transmembrane regions (helical) follow at residues Ala26–Ile46, Trp114–Phe134, Tyr136–Val156, Leu160–Leu180, Ala194–Leu214, Phe218–Leu238, Trp276–Leu296, Phe307–Gly327, Trp352–Trp372, and Tyr381–Phe401.

The protein belongs to the glycosyltransferase 87 family.

The protein localises to the cell membrane. It carries out the reaction Adds an alpha-D-arabinofuranosyl group from trans,octacis-decaprenylphospho-beta-D-arabinofuranose at the 3-O-position of an alpha-(1-&gt;5)-arabinofuranan chain attached to a beta-(1-&gt;5)-galactofuranan chain.. It functions in the pathway cell wall biogenesis; cell wall polysaccharide biosynthesis. Its function is as follows. Involved in the biosynthesis of the arabinogalactan (AG) region of the mycolylarabinogalactan-peptidoglycan (mAGP) complex, an essential component of the mycobacterial cell wall. Catalyzes the addition of an arabinofuranosyl (Araf) residue from the sugar donor beta-D-arabinofuranosyl-1-monophosphoryldecaprenol (DPA) on the C-3 of an alpha-(1-&gt;5)-linked Araf from the arabinan backbone of AG. The sequence is that of Alpha-(1-&gt;3)-arabinofuranosyltransferase (aftC) from Mycolicibacterium smegmatis (strain ATCC 700084 / mc(2)155) (Mycobacterium smegmatis).